The following is a 215-amino-acid chain: uncharacterized protein (215 aa).

Helical transmembrane passes span 21-40 (IIKY…VLIN), 50-69 (LIFS…SVIF), 95-117 (FFAI…YVLF), 122-144 (LEII…LVVL), 156-178 (ANFV…GLIL), and 183-205 (LQLI…FLSS).

Belongs to the CcmB/CycW/HelB family.

It is found in the cell membrane. This is an uncharacterized protein from Rickettsia conorii (strain ATCC VR-613 / Malish 7).